The primary structure comprises 107 residues: Nucleoid-associated protein A1E_05550 (107 aa).

The protein belongs to the YbaB/EbfC family. In terms of assembly, homodimer.

The protein resides in the cytoplasm. Its subcellular location is the nucleoid. Binds to DNA and alters its conformation. May be involved in regulation of gene expression, nucleoid organization and DNA protection. The chain is Nucleoid-associated protein A1E_05550 from Rickettsia canadensis (strain McKiel).